The chain runs to 407 residues: Lysine racemase (407 aa).

The signal sequence occupies residues M1–A18. C19 is lipidated: N-palmitoyl cysteine. Residue C19 is the site of S-diacylglycerol cysteine attachment. A disulfide bridge connects residues C70 and C96. K74 serves as the catalytic Proton acceptor. K74 carries the N6-(pyridoxal phosphate)lysine modification. Substrate is bound at residue R173. Y299 (proton acceptor) is an active-site residue. M347 serves as a coordination point for substrate.

The protein belongs to the alanine racemase family. Bsr subfamily. Forms a head-to-tail homodimer in the structure. It depends on pyridoxal 5'-phosphate as a cofactor.

Its subcellular location is the cell membrane. It localises to the periplasm. The catalysed reaction is L-lysine = D-lysine. It carries out the reaction L-arginine = D-arginine. Its activity is regulated as follows. The racemization activity of Lyr is completely inhibited by hydroxylamine. In terms of biological role, amino-acid racemase that catalyzes the interconversion of L-lysine and D-lysine. To a lesser extent, is also able to interconvert arginine enantiomers. Cannot use methionine, asparagine, alanine, leucine, glutamine, phenylalanine and histidine as substrates. This Proteus mirabilis protein is Lysine racemase.